Consider the following 501-residue polypeptide: Ribose import ATP-binding protein RbsA (501 aa).

2 ABC transporter domains span residues Leu-5 to Lys-241 and Ala-252 to Leu-495. Gly-37 to Ser-44 is an ATP binding site.

This sequence belongs to the ABC transporter superfamily. Ribose importer (TC 3.A.1.2.1) family. In terms of assembly, the complex is composed of an ATP-binding protein (RbsA), two transmembrane proteins (RbsC) and a solute-binding protein (RbsB).

Its subcellular location is the cell inner membrane. The enzyme catalyses D-ribose(out) + ATP + H2O = D-ribose(in) + ADP + phosphate + H(+). Functionally, part of the ABC transporter complex RbsABC involved in ribose import. Responsible for energy coupling to the transport system. This chain is Ribose import ATP-binding protein RbsA, found in Salmonella paratyphi A (strain ATCC 9150 / SARB42).